A 463-amino-acid polypeptide reads, in one-letter code: Probable glycosyltransferase 3 (463 aa).

Residues 1–24 are Cytoplasmic-facing; the sequence is MAVTGGGRPAVRQQAARGKQMQRT. A helical; Signal-anchor for type II membrane protein membrane pass occupies residues 25–47; the sequence is FNNVKITLICGFITLLVLRGTVG. At 48–463 the chain is on the lumenal side; the sequence is INLLTYGVGG…ALKMDAKIES (416 aa). The segment at 82–125 is disordered; sequence EIRSDTDDDDDDEEEEPLGVDASTTTTTNSTTTTATAARRRSSN. Positions 87 to 99 are enriched in acidic residues; that stretch reads TDDDDDDEEEEPL. A compositionally biased stretch (low complexity) spans 103–118; it reads ASTTTTTNSTTTTATA. N110, N125, and N442 each carry an N-linked (GlcNAc...) asparagine glycan.

The protein belongs to the glycosyltransferase 34 family.

Its subcellular location is the golgi apparatus membrane. Probable glycosyltransferase that may be involved in the biosynthesis of xyloglucan. The sequence is that of Probable glycosyltransferase 3 from Oryza sativa subsp. japonica (Rice).